The following is a 302-amino-acid chain: Segregation and condensation protein A (302 aa).

This sequence belongs to the ScpA family. Component of a cohesin-like complex composed of ScpA, ScpB and the Smc homodimer, in which ScpA and ScpB bind to the head domain of Smc. The presence of the three proteins is required for the association of the complex with DNA.

Its subcellular location is the cytoplasm. Participates in chromosomal partition during cell division. May act via the formation of a condensin-like complex containing Smc and ScpB that pull DNA away from mid-cell into both cell halves. In Xylella fastidiosa (strain 9a5c), this protein is Segregation and condensation protein A.